The sequence spans 162 residues: Protein NrdI (162 aa).

It belongs to the NrdI family.

In terms of biological role, probably involved in ribonucleotide reductase function. This Streptococcus pyogenes serotype M1 protein is Protein NrdI.